Here is a 293-residue protein sequence, read N- to C-terminus: Undecaprenyl-diphosphatase (293 aa).

The next 6 helical transmembrane spans lie at 74–94 (VLVFFAKEIWQIITGWFAGVF), 107–127 (WMIIVATIPVVILGVLGKDLI), 134–154 (MWITASVLILFSLVFILAEKM), 209–229 (FLLAIPAVLGSGLYSLPDAFA), 243–263 (VGTLFAFVVGYISIAWLMKFV), and 271–291 (FAAYRIPAGLLVMLLLALGML).

This sequence belongs to the UppP family.

It is found in the cell membrane. It carries out the reaction di-trans,octa-cis-undecaprenyl diphosphate + H2O = di-trans,octa-cis-undecaprenyl phosphate + phosphate + H(+). Its function is as follows. Catalyzes the dephosphorylation of undecaprenyl diphosphate (UPP). Confers resistance to bacitracin. This Corynebacterium glutamicum (strain R) protein is Undecaprenyl-diphosphatase.